Here is a 1221-residue protein sequence, read N- to C-terminus: 2-oxoglutarate dehydrogenase E1/E2 component (1221 aa).

Residues 2-40 form a 2-oxoglutarate dehydrogenase E1, N-terminal part region; the sequence is SSASTFGQNAWLVDEMFQQFQKDPKSVDKEWRELFEAQG. Positions 22-107 are disordered; the sequence is QKDPKSVDKE…KLPEPGQTPI (86 aa). Residues 23–36 are compositionally biased toward basic and acidic residues; sequence KDPKSVDKEWRELF. Residues 41-52 show a composition bias toward polar residues; it reads GPNTTPATTEAQ. The segment at 41-89 is linker; it reads GPNTTPATTEAQPSAPKESAKPAPKAAPAAKAAPRVETKPADKTAPKAK. Residues 53 to 73 are compositionally biased toward low complexity; the sequence is PSAPKESAKPAPKAAPAAKAA. Residues 74–90 are compositionally biased toward basic and acidic residues; that stretch reads PRVETKPADKTAPKAKE. A succinyltransferase E2 region spans residues 90-337; sequence ESSVPQQPKL…LRTMSRLLTD (248 aa). The Proton acceptor; for succinyltransferase activity role is filled by H316. Residues 338–1221 form a 2-oxoglutarate dehydrogenase E1, C-terminal part region; the sequence is DSFWDEIFDA…KQLIDEAFEA (884 aa). R544 provides a ligand contact to thiamine diphosphate. Residues H583 and S608 each coordinate 2-oxoglutarate. Residues S608, L610, D645, A646, A647, and N678 each coordinate thiamine diphosphate. D645 contributes to the Mg(2+) binding site. Mg(2+)-binding residues include N678 and I680. Position 1017 (H1017) interacts with 2-oxoglutarate. Residues T1035, R1051, K1087, S1090, and R1144 each coordinate acetyl-CoA.

It in the N-terminal section; belongs to the alpha-ketoglutarate dehydrogenase family. In the C-terminal section; belongs to the 2-oxoacid dehydrogenase family. Homodimer. Part of an unusual ODH/PDH supercomplex, consisting of AceE (E1), AceF (E2), and Lpd (E3) together with OdhA (E1+E2). Interacts with the FHA domain of unphosphorylated OdhI via its C-terminal dehydrogenase domain. Mg(2+) is required as a cofactor. It depends on thiamine diphosphate as a cofactor.

The enzyme catalyses N(6)-[(R)-lipoyl]-L-lysyl-[protein] + 2-oxoglutarate + H(+) = N(6)-[(R)-S(8)-succinyldihydrolipoyl]-L-lysyl-[protein] + CO2. The catalysed reaction is N(6)-[(R)-dihydrolipoyl]-L-lysyl-[protein] + succinyl-CoA = N(6)-[(R)-S(8)-succinyldihydrolipoyl]-L-lysyl-[protein] + CoA. It participates in carbohydrate metabolism; tricarboxylic acid cycle; succinyl-CoA from 2-oxoglutarate (dehydrogenase route): step 1/1. With respect to regulation, inhibited by unphosphorylated OdhI, but not by phosphorylated OdhI. In terms of biological role, catalyzes the E1 and E2 reactions as part of 2-oxoglutarate dehydrogenase (ODH) activity, to convert 2-oxoglutarate to succinyl-CoA and CO(2). OdhA has reductase activity with 2-oxoglutarate but does not react with pyruvate, and also displays transsuccinylase but no transacetylase activity. Since OdhA is not lipoylated, the succinyltransferase activity of its E2 domain is dependent on lipoyl residues of the acetyltransferase AceF. This is 2-oxoglutarate dehydrogenase E1/E2 component from Corynebacterium glutamicum (strain ATCC 13032 / DSM 20300 / JCM 1318 / BCRC 11384 / CCUG 27702 / LMG 3730 / NBRC 12168 / NCIMB 10025 / NRRL B-2784 / 534).